A 252-amino-acid chain; its full sequence is Iron-sulfur cluster co-chaperone protein HscB homolog (252 aa).

Residues 1-59 (MKKTKTMVASISTLIRRTYPSTNQCNSLATIQSQTQLPRESLQHHSSAEGRLRFSGRVF) constitute a mitochondrion transit peptide. The 73-residue stretch at 93 to 165 (DYFQIFGLEK…LSRAMYIMKL (73 aa)) folds into the J domain.

The protein belongs to the HscB family. Interacts with ISU1 and HSP70-9/HSCA1.

The protein localises to the mitochondrion. The protein resides in the cytoplasm. Its subcellular location is the cytosol. Co-chaperone required for the assembly of iron-sulfur [Fe-S] clusters in both mitochondria and cytosol. Required for the activity of iron-sulfur proteins such as aconitase and succinate dehydrogenase. Involved in iron homeostasis and may take part in the control of iron translocation from roots to shoots. The sequence is that of Iron-sulfur cluster co-chaperone protein HscB homolog from Arabidopsis thaliana (Mouse-ear cress).